A 613-amino-acid polypeptide reads, in one-letter code: DNA mismatch repair protein MutL (613 aa).

This sequence belongs to the DNA mismatch repair MutL/HexB family.

In terms of biological role, this protein is involved in the repair of mismatches in DNA. It is required for dam-dependent methyl-directed DNA mismatch repair. May act as a 'molecular matchmaker', a protein that promotes the formation of a stable complex between two or more DNA-binding proteins in an ATP-dependent manner without itself being part of a final effector complex. The polypeptide is DNA mismatch repair protein MutL (Bradyrhizobium sp. (strain ORS 278)).